The sequence spans 446 residues: Acyl-lipid (8-3)-desaturase (446 aa).

The region spanning 6-82 is the Cytochrome b5 heme-binding domain; sequence GKTFTWEELA…MKKYYVGTLV (77 aa). 2 residues coordinate heme: H41 and H64. 2 helical membrane-spanning segments follow: residues 125–145 and 150–170; these read ALIF…PFVV and LQVV…LNPL. The Histidine box-1 motif lies at 171 to 175; that stretch reads HDASH. The Histidine box-2 signature appears at 207–212; that stretch reads HMLGHH. The Histidine box-3 motif lies at 387 to 391; sequence QAVHH.

Belongs to the fatty acid desaturase type 1 family. It depends on Fe(2+) as a cofactor.

It localises to the membrane. The enzyme catalyses an (8Z,11Z,14Z)-icosatrienoyl-containing glycerolipid + 2 Fe(II)-[cytochrome b5] + O2 + 2 H(+) = (5Z,8Z,11Z,14Z)-eicosatetraenoyl-containing glycerolipid + 2 Fe(III)-[cytochrome b5] + 2 H2O. The catalysed reaction is an (8Z,11Z,14Z,17Z)-eicosatetraenoyl-containing glycerolipid + 2 Fe(II)-[cytochrome b5] + O2 + 2 H(+) = a (5Z,8Z,11Z,14Z,17Z)-eicosapentaenoyl-containing glycerolipid + 2 Fe(III)-[cytochrome b5] + 2 H2O. In terms of biological role, fatty acid desaturase that introduces a cis double bond at the 5-position in 20-carbon polyunsaturated fatty acids incorporated in a glycerolipid that contain a Delta(8) double bond. Involved in the conversion of di-homo-Delta-linolenic acid to arachidonic acid. Essential in the production of eicosanoids. The sequence is that of Acyl-lipid (8-3)-desaturase (DES1) from Mortierella alpina (Oleaginous fungus).